Here is a 345-residue protein sequence, read N- to C-terminus: MNSKLFSPYTIKNVTLKNRIVMSPMCMYSSGNEDGRVTNFHLIHYGTRAAGQVGLVMVEATAVLAEGRISNKDLGIWDDNLIEGLHKTTTFIHDNGAKAAIQLAHAGRKAELGTNAFAPSAIPFSDTMKIPVEMNIQQIKETILAFQRAALRSKQAGFDVIELHGAHGYLINEFLSPLTNKRTDEYGGSPENRYRFLREIIDSVNKVWDGPIFVRISANDYHPDGLTVQDYVQYTKWMKEQGIDLIDCSSGAVVPAHIDVYPGYQVQYAKHIKEYTKIATGAVGLITTGSQAEQILNDNEADLIFIGRELLRNPYFPRIAANELGFELQEPHQYKRAPGKIHTNK.

23-26 is a binding site for FMN; sequence SPMC. Substrate is bound at residue tyrosine 28. FMN contacts are provided by alanine 60 and glutamine 102. Residue 164-167 coordinates substrate; it reads HGAH. FMN is bound by residues arginine 215 and 307 to 308; that span reads GR.

It belongs to the NADH:flavin oxidoreductase/NADH oxidase family. NamA subfamily. Homotetramer. Requires FMN as cofactor.

It catalyses the reaction A + NADPH + H(+) = AH2 + NADP(+). In terms of biological role, catalyzes the reduction of the double bond of an array of alpha,beta-unsaturated aldehydes and ketones. It also reduces the nitro group of nitroester and nitroaromatic compounds. It could have a role in detoxification processes. In Bacillus cereus (strain G9842), this protein is NADPH dehydrogenase.